The following is a 281-amino-acid chain: Proteasome subunit beta (281 aa).

Positions Met1–Gly53 are cleaved as a propeptide — removed in mature form; by autocatalysis. Catalysis depends on Thr54, which acts as the Nucleophile.

This sequence belongs to the peptidase T1B family. The 20S proteasome core is composed of 14 alpha and 14 beta subunits that assemble into four stacked heptameric rings, resulting in a barrel-shaped structure. The two inner rings, each composed of seven catalytic beta subunits, are sandwiched by two outer rings, each composed of seven alpha subunits. The catalytic chamber with the active sites is on the inside of the barrel. Has probably a gated structure, the ends of the cylinder being occluded by the N-termini of the alpha-subunits. Is likely capped by the proteasome-associated ATPase, ARC.

The protein resides in the cytoplasm. It carries out the reaction Cleavage of peptide bonds with very broad specificity.. The protein operates within protein degradation; proteasomal Pup-dependent pathway. Its activity is regulated as follows. The formation of the proteasomal ATPase ARC-20S proteasome complex, likely via the docking of the C-termini of ARC into the intersubunit pockets in the alpha-rings, may trigger opening of the gate for substrate entry. Interconversion between the open-gate and close-gate conformations leads to a dynamic regulation of the 20S proteasome proteolysis activity. Peptidolytic activity is completely inhibited by lactacystin, and to a lesser extent, by N-acetyl-Leu-Leu-norleucinal (Ac-LLnL) and benzoyloxycarbonyl-Leu-Leu-Leu-vinylsulfone (Z-LLL-VS) in vitro. Component of the proteasome core, a large protease complex with broad specificity involved in protein degradation. The S.coelicolor proteasome is able to cleave oligopeptides after hydrophobic residues, but not after basic or acidic residues, thus displaying chymotrypsin-like activity but not trypsin-like activity. The chain is Proteasome subunit beta from Streptomyces coelicolor (strain ATCC BAA-471 / A3(2) / M145).